A 57-amino-acid polypeptide reads, in one-letter code: Protein translocase subunit SecE (57 aa).

Residues 30-50 form a helical membrane-spanning segment; that stretch reads LIAGAGIVFVGFLGFLIFAIM.

The protein belongs to the SecE/SEC61-gamma family. Component of the Sec protein translocase complex. Heterotrimer consisting of SecY (alpha), SecG (beta) and SecE (gamma) subunits. The heterotrimers can form oligomers, although 1 heterotrimer is thought to be able to translocate proteins. Interacts with the ribosome. May interact with SecDF, and other proteins may be involved.

Its subcellular location is the cell membrane. Functionally, essential subunit of the Sec protein translocation channel SecYEG. Clamps together the 2 halves of SecY. May contact the channel plug during translocation. This Haloquadratum walsbyi (strain DSM 16790 / HBSQ001) protein is Protein translocase subunit SecE.